Here is a 139-residue protein sequence, read N- to C-terminus: CLAVATA3/ESR (CLE)-related protein 1 (139 aa).

The N-terminal stretch at 1–22 (MPNIFKILLIVLLAVVSFRLSA) is a signal peptide. Positions 23-90 (STGDKKTAND…VPSHLTNRSM (68 aa)) are required for secretion from the host cytoplasm to the host apoplasm. N-linked (GlcNAc...) asparagine glycosylation is found at Asn-37 and Asn-87. The tract at residues 66–139 (AIGRSNAQGG…SPSGPDPHHH (74 aa)) is disordered. The stretch at 100 to 125 (EKGAATRVEKMRAQLRELAEKMTDKD) forms a coiled coil. The segment covering 106–128 (RVEKMRAQLRELAEKMTDKDPKR) has biased composition (basic and acidic residues). The CLE signature appears at 128–139 (RLSPSGPDPHHH).

Belongs to the CLV3/ESR signal peptide family. In terms of tissue distribution, highly expressed exclusively within the dorsal esophageal gland cell during syncytium formation in host plants (at protein level).

Its subcellular location is the secreted. The protein localises to the host cytoplasm. The protein resides in the host extracellular space. It is found in the extracellular space. It localises to the apoplast. In terms of biological role, mimics host plant CLE extracellular signal peptides that regulate cell fate. May play a role in the differentiation or division of feeding cells (syncytia) induced in plant roots during infection. The chain is CLAVATA3/ESR (CLE)-related protein 1 (CLE1) from Heterodera glycines (Soybean cyst nematode worm).